A 210-amino-acid polypeptide reads, in one-letter code: Imidazoleglycerol-phosphate dehydratase (210 aa).

This sequence belongs to the imidazoleglycerol-phosphate dehydratase family.

The protein resides in the cytoplasm. The enzyme catalyses D-erythro-1-(imidazol-4-yl)glycerol 3-phosphate = 3-(imidazol-4-yl)-2-oxopropyl phosphate + H2O. It functions in the pathway amino-acid biosynthesis; L-histidine biosynthesis; L-histidine from 5-phospho-alpha-D-ribose 1-diphosphate: step 6/9. The protein is Imidazoleglycerol-phosphate dehydratase of Acidovorax ebreus (strain TPSY) (Diaphorobacter sp. (strain TPSY)).